Here is a 290-residue protein sequence, read N- to C-terminus: GTPase Era (290 aa).

Positions 2–169 constitute an Era-type G domain; the sequence is KSGFAAILGR…KNKIYENFSE (168 aa). A G1 region spans residues 10–17; sequence GRPSTGKS. GTP is bound at residue 10 to 17; the sequence is GRPSTGKS. Residues 36–40 form a G2 region; it reads QTTRN. The G3 stretch occupies residues 57–60; the sequence is DTPG. Residues 57-61 and 119-122 contribute to the GTP site; these read DTPGF and NKVD. The interval 119-122 is G4; the sequence is NKVD. A G5 region spans residues 148–150; it reads ISA. The KH type-2 domain occupies 200–276; the sequence is LKEELPYSLY…NLFLQVKLKK (77 aa).

It belongs to the TRAFAC class TrmE-Era-EngA-EngB-Septin-like GTPase superfamily. Era GTPase family. In terms of assembly, monomer.

The protein localises to the cytoplasm. It is found in the cell inner membrane. In terms of biological role, an essential GTPase that binds both GDP and GTP, with rapid nucleotide exchange. Plays a role in 16S rRNA processing and 30S ribosomal subunit biogenesis and possibly also in cell cycle regulation and energy metabolism. This chain is GTPase Era, found in Borreliella afzelii (strain PKo) (Borrelia afzelii).